Reading from the N-terminus, the 886-residue chain is Valine--tRNA ligase (886 aa).

A 'HIGH' region motif is present at residues 43 to 53; it reads PYPTGRMHLGH. A 'KMSKS' region motif is present at residues 528-532; it reads KMSKS. Lys-531 lines the ATP pocket.

Belongs to the class-I aminoacyl-tRNA synthetase family. ValS type 2 subfamily.

The protein localises to the cytoplasm. The catalysed reaction is tRNA(Val) + L-valine + ATP = L-valyl-tRNA(Val) + AMP + diphosphate. Functionally, catalyzes the attachment of valine to tRNA(Val). As ValRS can inadvertently accommodate and process structurally similar amino acids such as threonine, to avoid such errors, it has a 'posttransfer' editing activity that hydrolyzes mischarged Thr-tRNA(Val) in a tRNA-dependent manner. This chain is Valine--tRNA ligase, found in Methanococcus maripaludis (strain DSM 14266 / JCM 13030 / NBRC 101832 / S2 / LL).